The sequence spans 465 residues: tRNA modification GTPase MnmE (465 aa).

Residues Arg24, Glu84, and Lys127 each coordinate (6S)-5-formyl-5,6,7,8-tetrahydrofolate. Positions 223–383 constitute a TrmE-type G domain; sequence GLNIVLAGQP…LRGELLRLIG (161 aa). Asn233 contributes to the K(+) binding site. GTP contacts are provided by residues 233 to 238, 252 to 258, and 277 to 280; these read NVGKSS, TAIAGTT, and DTAG. Position 237 (Ser237) interacts with Mg(2+). Residues Thr252, Ile254, and Thr257 each contribute to the K(+) site. Thr258 contributes to the Mg(2+) binding site. Lys465 is a binding site for (6S)-5-formyl-5,6,7,8-tetrahydrofolate.

This sequence belongs to the TRAFAC class TrmE-Era-EngA-EngB-Septin-like GTPase superfamily. TrmE GTPase family. In terms of assembly, homodimer. Heterotetramer of two MnmE and two MnmG subunits. The cofactor is K(+).

Its subcellular location is the cytoplasm. Exhibits a very high intrinsic GTPase hydrolysis rate. Involved in the addition of a carboxymethylaminomethyl (cmnm) group at the wobble position (U34) of certain tRNAs, forming tRNA-cmnm(5)s(2)U34. The polypeptide is tRNA modification GTPase MnmE (Janthinobacterium sp. (strain Marseille) (Minibacterium massiliensis)).